Consider the following 232-residue polypeptide: Somatolactin (232 aa).

The N-terminal stretch at 1-16 is a signal peptide; sequence MHNWKGVWLCSLFLTF. Cystine bridges form between Cys-31/Cys-41, Cys-91/Cys-206, and Cys-223/Cys-231. Asn-147 carries an N-linked (GlcNAc...) asparagine glycan.

This sequence belongs to the somatotropin/prolactin family. In terms of tissue distribution, pituitary gland.

Its subcellular location is the secreted. The polypeptide is Somatolactin (Protopterus annectens (African lungfish)).